The sequence spans 1106 residues: Carbamoyl phosphate synthase large chain (1106 aa).

The segment at 1-402 (MPRREDIRSV…SFQKALRSLE (402 aa)) is carboxyphosphate synthetic domain. R129, R169, G175, G176, E208, V210, E215, G241, V242, H243, Q285, and E299 together coordinate ATP. One can recognise an ATP-grasp 1 domain in the interval 133 to 328 (KKAMEKIGVR…IAKIAALLSI (196 aa)). 3 residues coordinate Mg(2+): Q285, E299, and N301. Residues Q285, E299, and N301 each coordinate Mn(2+). Positions 403–582 (IDRYGFGSDG…YSSYDEEDES (180 aa)) are oligomerization domain. The carbamoyl phosphate synthetic domain stretch occupies residues 583–964 (DVTNAKSVMI…AFLKSQYMAG (382 aa)). Positions 707 to 898 (VEVLEKLKLN…IVKYATRIMM (192 aa)) constitute an ATP-grasp 2 domain. Residues R743, S782, L784, E789, G814, I815, H816, S817, Q857, and E869 each coordinate ATP. Q857, E869, and N871 together coordinate Mg(2+). Q857, E869, and N871 together coordinate Mn(2+). Residues 965–1106 (DELPSQGTVF…QEIHAMPKIL (142 aa)) form the MGS-like domain. An allosteric domain region spans residues 965 to 1106 (DELPSQGTVF…QEIHAMPKIL (142 aa)).

It belongs to the CarB family. In terms of assembly, composed of two chains; the small (or glutamine) chain promotes the hydrolysis of glutamine to ammonia, which is used by the large (or ammonia) chain to synthesize carbamoyl phosphate. Tetramer of heterodimers (alpha,beta)4. Requires Mg(2+) as cofactor. It depends on Mn(2+) as a cofactor.

It carries out the reaction hydrogencarbonate + L-glutamine + 2 ATP + H2O = carbamoyl phosphate + L-glutamate + 2 ADP + phosphate + 2 H(+). It catalyses the reaction hydrogencarbonate + NH4(+) + 2 ATP = carbamoyl phosphate + 2 ADP + phosphate + 2 H(+). Its pathway is amino-acid biosynthesis; L-arginine biosynthesis; carbamoyl phosphate from bicarbonate: step 1/1. It functions in the pathway pyrimidine metabolism; UMP biosynthesis via de novo pathway; (S)-dihydroorotate from bicarbonate: step 1/3. Its function is as follows. Large subunit of the glutamine-dependent carbamoyl phosphate synthetase (CPSase). CPSase catalyzes the formation of carbamoyl phosphate from the ammonia moiety of glutamine, carbonate, and phosphate donated by ATP, constituting the first step of 2 biosynthetic pathways, one leading to arginine and/or urea and the other to pyrimidine nucleotides. The large subunit (synthetase) binds the substrates ammonia (free or transferred from glutamine from the small subunit), hydrogencarbonate and ATP and carries out an ATP-coupled ligase reaction, activating hydrogencarbonate by forming carboxy phosphate which reacts with ammonia to form carbamoyl phosphate. The sequence is that of Carbamoyl phosphate synthase large chain from Leptospira interrogans serogroup Icterohaemorrhagiae serovar copenhageni (strain Fiocruz L1-130).